Here is a 1360-residue protein sequence, read N- to C-terminus: DNA-directed RNA polymerase subunit beta (1360 aa).

This sequence belongs to the RNA polymerase beta chain family. As to quaternary structure, the RNAP catalytic core consists of 2 alpha, 1 beta, 1 beta' and 1 omega subunit. When a sigma factor is associated with the core the holoenzyme is formed, which can initiate transcription.

It carries out the reaction RNA(n) + a ribonucleoside 5'-triphosphate = RNA(n+1) + diphosphate. In terms of biological role, DNA-dependent RNA polymerase catalyzes the transcription of DNA into RNA using the four ribonucleoside triphosphates as substrates. The protein is DNA-directed RNA polymerase subunit beta of Desulfotalea psychrophila (strain LSv54 / DSM 12343).